The sequence spans 144 residues: MKIKTIIAVFGVLFSAHALADVTNAEKLVYKYTNIAHSANPMYEAPSITDGKIFFNRKFKTPSGKEAACASCHTNNPANVGKNIVTGKEIPPLAPRVNTKRFTDIDKVEDEFTKHCNDILGADCSPSEKANFIAYLLTETKPTK.

Residues 1–20 (MKIKTIIAVFGVLFSAHALA) form the signal peptide. Heme c contacts are provided by C69, C72, H73, and H115. A disulfide bridge links C116 with C124.

Monomer. Binds 1 heme c group covalently per subunit. The heme is low-spin in the oxidized state but switches to a high-spin form upon reduction, due to the dissociation of one of the axial histidines, His-115.

This chain is Cytochrome c'' (cycA), found in Methylophilus methylotrophus (Bacterium W3A1).